The sequence spans 852 residues: Zinc finger protein 484 (852 aa).

The KRAB domain maps to Val8–Pro78. A Glycyl lysine isopeptide (Lys-Gly) (interchain with G-Cter in SUMO2) cross-link involves residue Lys156. A C2H2-type 1; degenerate zinc finger spans residues Cys223–His245. Residues His279 to Tyr301 form a C2H2-type 2; degenerate zinc finger. Residues Tyr328–His350 form a C2H2-type 3; degenerate zinc finger. A C2H2-type 4; degenerate zinc finger spans residues Tyr356 to His378. 15 C2H2-type zinc fingers span residues Phe384 to His406, Tyr412 to His434, Tyr440 to His462, Phe468 to His490, Tyr496 to His518, Tyr524 to His546, Tyr552 to His574, Tyr580 to His602, Tyr608 to His630, Tyr636 to His658, Tyr664 to His686, Tyr692 to His714, Tyr720 to His742, Tyr748 to His770, and Tyr776 to His798. A Glycyl lysine isopeptide (Lys-Gly) (interchain with G-Cter in SUMO2) cross-link involves residue Lys816.

This sequence belongs to the krueppel C2H2-type zinc-finger protein family.

The protein resides in the nucleus. In terms of biological role, may be involved in transcriptional regulation. This chain is Zinc finger protein 484 (ZNF484), found in Homo sapiens (Human).